The primary structure comprises 360 residues: G-protein coupled receptor 15 (360 aa).

At 1-33 (MDPEETSVYLDYYYATSPNPDIRETHSHVPYTS) the chain is on the extracellular side. The chain crosses the membrane as a helical span at residues 34 to 54 (VFLPVFYTAVFLTGVLGNLVL). Residues 55-69 (MGALHFKPGSRRLID) are Cytoplasmic-facing. A helical membrane pass occupies residues 70 to 90 (IFIINLAASDFIFLVTLPLWV). Residues 91-120 (DKEASLGLWRTGSFLCKGSSYMISVNMHCS) are Extracellular-facing. A helical transmembrane segment spans residues 121–141 (VFLLTCMSVDRYLAIVCPVVS). The Cytoplasmic portion of the chain corresponds to 142–149 (RKFRRTDC). A helical membrane pass occupies residues 150–170 (AYVVCASIWFISCLLGLPTLL). Over 171–192 (SRELTLIDDKPYCAEKKATPLK) the chain is Extracellular. The chain crosses the membrane as a helical span at residues 193 to 213 (LIWSLVALIFTFFVPLLSIVT). The Cytoplasmic segment spans residues 214 to 239 (CYCCIARKLCAHYQQSGKHNKKLKKS). Residues 240–260 (IKIIFIVVAAFLVSWLPFNTF) form a helical membrane-spanning segment. Topologically, residues 261–284 (KLLAIVSGLQQERYFPSAMLQLGM) are extracellular. Residues 285–305 (EVSGPLAFANSCVNPFIYYIF) traverse the membrane as a helical segment. Residues 306–360 (DSYIRRAIVHCLCPCLKNYDFGSSTETSDSHLTKALSTFIHAEDFTRRRKRSVSL) are Cytoplasmic-facing. Ser359 carries the phosphoserine modification.

The protein belongs to the G-protein coupled receptor 1 family. Interacts with adapter YWHAE; this interaction promotes ER-to-Golgi transport of GPR15. Phosphorylation is necessary for YWHAE binding and efficient surface expression. Post-translationally, O-glycosylated. Sialylated O-glycans in the N-terminal tail inhibits binding of GPR15LG. In terms of processing, sulfation is required for efficient binding of GPR15LG.

Its subcellular location is the cell membrane. Functionally, g protein-coupled receptor that plays an important role in immune homeostasis. Acts via its natural ligand GPR15LG, a chemokine-like polypeptide strongly expressed in gastrointestinal tissues. GPR15-GPR15LG signaling axis regulates intestinal homeostasis and inflammation through the migration of immune cells. Controls thereby the specific homing of T-cells, particularly FOXP3+ regulatory T-cells (Tregs), to the large intestine lamina propria. Also required for skin localization of thymus-derived dendritic epidermal T-cells. Plays an important role in mediating cytoprotective function as well as angiogenesis of thrombomodulin. Mechanistically, preferentially signals through the Gi/o pathway to inhibit adenylate cyclase activity and activate a phosphatidylinositol-calcium second messenger system that regulates the release of Ca(2+) ions from intracellular stores. This is G-protein coupled receptor 15 (GPR15) from Macaca mulatta (Rhesus macaque).